Consider the following 233-residue polypeptide: uncharacterized protein (233 aa).

3 helical membrane-spanning segments follow: residues 78–98 (FCLI…PVMY), 113–133 (FITC…LFKL), and 188–208 (FLLI…YGTI).

The protein resides in the membrane. This is an uncharacterized protein from Saccharomyces cerevisiae (strain ATCC 204508 / S288c) (Baker's yeast).